We begin with the raw amino-acid sequence, 532 residues long: Collagen alpha-1(XXIII) chain (532 aa).

Topologically, residues 1 to 23 (MGAGERAAGGGGTQDPGAGCGAR) are cytoplasmic. Residues 24-45 (ALGALCLLLSVGSATACLLLGA) form a helical; Signal-anchor for type II membrane protein membrane-spanning segment. Residues 46–532 (QAAALHGRVA…GLPVPGCWHK (487 aa)) are Extracellular-facing. A disordered region spans residues 102–532 (PSECICPPGP…GLPVPGCWHK (431 aa)). 4 consecutive Collagen-like domains span residues 108–163 (PPGP…FGPR), 173–232 (GPPG…PGKK), 242–297 (GLPG…EQGD), and 313–372 (GPPG…MGLS). 2 stretches are compositionally biased toward low complexity: residues 129–145 (QSGR…DGKP) and 157–172 (PGDF…DGAA). Pro residues-rich tracts occupy residues 174–184 (PPGPPGPPGAR), 241–250 (PGLPGPPGPK), and 314–326 (PPGP…PPGI). Basic and acidic residues-rich tracts occupy residues 342–354 (DGEK…KGDP) and 380–393 (PKGE…DHLQ). Over residues 403-414 (PGPPGPPGPPGP) the composition is skewed to pro residues. Collagen-like domains lie at 404-452 (GPPG…GPPG) and 455-514 (GLPG…PGLD). 2 stretches are compositionally biased toward basic and acidic residues: residues 427–441 (DGAK…ERGP) and 478–495 (RGEK…ERGV).

Homotrimer. Post-translationally, undergoes proteolytic cleavage by furin protease to yield a 60 kDa soluble form that forms a homotrimer and exhibits a low affinity interaction with heparin.

The protein resides in the cell membrane. This chain is Collagen alpha-1(XXIII) chain (Col23a1), found in Rattus norvegicus (Rat).